The chain runs to 316 residues: tRNA pseudouridine synthase B (316 aa).

Catalysis depends on Asp47, which acts as the Nucleophile.

Belongs to the pseudouridine synthase TruB family. Type 1 subfamily.

It catalyses the reaction uridine(55) in tRNA = pseudouridine(55) in tRNA. Its function is as follows. Responsible for synthesis of pseudouridine from uracil-55 in the psi GC loop of transfer RNAs. This Photobacterium profundum (strain SS9) protein is tRNA pseudouridine synthase B.